Consider the following 212-residue polypeptide: External core antigen (212 aa).

Positions 1–19 (MQLFHLCLIISCSCPTVQA) are cleaved as a signal peptide. The tract at residues 25-27 (GWL) is HBEAG. The disordered stretch occupies residues 165–212 (NAPILSTLPETTVVRRRGRSPRRRTPSPRRRRSQSPRRRRSQSRESQC). A compositionally biased stretch (basic residues) spans 178 to 205 (VRRRGRSPRRRTPSPRRRRSQSPRRRRS). One copy of the 1; half-length repeat lies at 184–190 (SPRRRTP). The interval 184–206 (SPRRRTPSPRRRRSQSPRRRRSQ) is 3 X 8 AA repeats of S-P-R-R-R-R-S-Q. A propeptide spanning residues 184 to 212 (SPRRRTPSPRRRRSQSPRRRRSQSRESQC) is cleaved from the precursor. 2 consecutive repeat copies span residues 191–198 (SPRRRRSQ) and 199–206 (SPRRRRSQ).

Belongs to the orthohepadnavirus precore antigen family. As to quaternary structure, homodimerizes. Post-translationally, phosphorylated. In terms of processing, cleaved by host furin.

It localises to the secreted. It is found in the host nucleus. May regulate immune response to the intracellular capsid in acting as a T-cell tolerogen, by having an immunoregulatory effect which prevents destruction of infected cells by cytotoxic T-cells. This immune regulation may predispose to chronicity during perinatal infections and prevent severe liver injury during adult infections. The polypeptide is External core antigen (Hepatitis B virus genotype C subtype ayw (isolate China/Tibet127/2002) (HBV-C)).